A 100-amino-acid chain; its full sequence is MAKKSLIQREKKRQKLEQKYHLIRRSSKEEISKVRSLSDKWEIYGKLQSPPRNSAPTRLHRRCFSTGRPRANYRDFGLSGHILREMVHACLLPGATRSSW.

This sequence belongs to the universal ribosomal protein uS14 family. As to quaternary structure, part of the 30S ribosomal subunit.

The protein localises to the plastid. Its subcellular location is the chloroplast. Functionally, binds 16S rRNA, required for the assembly of 30S particles. This is Small ribosomal subunit protein uS14c from Helianthus annuus (Common sunflower).